Consider the following 415-residue polypeptide: NADH-quinone oxidoreductase subunit D (415 aa).

The protein belongs to the complex I 49 kDa subunit family. In terms of assembly, NDH-1 is composed of 14 different subunits. Subunits NuoB, C, D, E, F, and G constitute the peripheral sector of the complex.

Its subcellular location is the cell inner membrane. It carries out the reaction a quinone + NADH + 5 H(+)(in) = a quinol + NAD(+) + 4 H(+)(out). In terms of biological role, NDH-1 shuttles electrons from NADH, via FMN and iron-sulfur (Fe-S) centers, to quinones in the respiratory chain. The immediate electron acceptor for the enzyme in this species is believed to be ubiquinone. Couples the redox reaction to proton translocation (for every two electrons transferred, four hydrogen ions are translocated across the cytoplasmic membrane), and thus conserves the redox energy in a proton gradient. The chain is NADH-quinone oxidoreductase subunit D from Myxococcus xanthus (strain DK1622).